The primary structure comprises 345 residues: Probable aldo-keto reductase 4 (345 aa).

Y63 functions as the Proton donor in the catalytic mechanism. H130 provides a ligand contact to substrate. 209–219 (SPLGRGFFASG) contributes to the NADP(+) binding site.

This sequence belongs to the aldo/keto reductase family.

This Arabidopsis thaliana (Mouse-ear cress) protein is Probable aldo-keto reductase 4.